Reading from the N-terminus, the 352-residue chain is UDP-N-acetylglucosamine--N-acetylmuramyl-(pentapeptide) pyrophosphoryl-undecaprenol N-acetylglucosamine transferase 2 (352 aa).

Residues 11–13 (SAG), R164, S194, and Q289 each bind UDP-N-acetyl-alpha-D-glucosamine.

This sequence belongs to the glycosyltransferase 28 family. MurG subfamily.

It is found in the cell membrane. The enzyme catalyses di-trans,octa-cis-undecaprenyl diphospho-N-acetyl-alpha-D-muramoyl-L-alanyl-D-glutamyl-meso-2,6-diaminopimeloyl-D-alanyl-D-alanine + UDP-N-acetyl-alpha-D-glucosamine = di-trans,octa-cis-undecaprenyl diphospho-[N-acetyl-alpha-D-glucosaminyl-(1-&gt;4)]-N-acetyl-alpha-D-muramoyl-L-alanyl-D-glutamyl-meso-2,6-diaminopimeloyl-D-alanyl-D-alanine + UDP + H(+). The protein operates within cell wall biogenesis; peptidoglycan biosynthesis. Cell wall formation. Catalyzes the transfer of a GlcNAc subunit on undecaprenyl-pyrophosphoryl-MurNAc-pentapeptide (lipid intermediate I) to form undecaprenyl-pyrophosphoryl-MurNAc-(pentapeptide)GlcNAc (lipid intermediate II). The protein is UDP-N-acetylglucosamine--N-acetylmuramyl-(pentapeptide) pyrophosphoryl-undecaprenol N-acetylglucosamine transferase 2 of Bacillus cereus (strain ATCC 14579 / DSM 31 / CCUG 7414 / JCM 2152 / NBRC 15305 / NCIMB 9373 / NCTC 2599 / NRRL B-3711).